Here is a 98-residue protein sequence, read N- to C-terminus: Hainantoxin-XVII (98 aa).

An N-terminal signal peptide occupies residues 1-40 (MTTVGVSLFRRSPEKITMKIATFLGLSFLLIASYVLICEA). Residues 41-64 (QHPGFQELLILEENMRDPENSKER) constitute a propeptide that is removed on maturation. Disulfide bonds link cysteine 66–cysteine 81, cysteine 73–cysteine 85, and cysteine 80–cysteine 95.

It belongs to the hainantoxin family. 17 subfamily. As to expression, expressed by the venom gland.

It localises to the secreted. In terms of biological role, putative ion channel inhibitor. This chain is Hainantoxin-XVII, found in Cyriopagopus hainanus (Chinese bird spider).